We begin with the raw amino-acid sequence, 577 residues long: Laccase-17 (577 aa).

Positions 1-22 are cleaved as a signal peptide; it reads MALQLLLAVFSCVLLLPQPAFG. Plastocyanin-like domains lie at 30-146 and 156-309; these read EIKM…PKRG and KEVP…YEPP. Residues Asn35 and Asn76 are each glycosylated (N-linked (GlcNAc...) asparagine). Cu cation contacts are provided by His80 and His82. Asn112 carries an N-linked (GlcNAc...) asparagine glycan. Cu cation contacts are provided by His125 and His127. 12 N-linked (GlcNAc...) asparagine glycosylation sites follow: Asn185, Asn201, Asn237, Asn297, Asn335, Asn383, Asn391, Asn401, Asn437, Asn444, Asn450, and Asn460. The Plastocyanin-like 3 domain maps to 427–561; that stretch reads KFPWSPIVPF…RMAWLVLDGD (135 aa). Cu cation is bound by residues His478, His481, His483, His540, Cys541, His542, and His546.

This sequence belongs to the multicopper oxidase family. It depends on Cu cation as a cofactor. Ubiquitous with higher levels in the inflorescence stem.

Its subcellular location is the secreted. It is found in the extracellular space. The protein localises to the apoplast. The catalysed reaction is 4 hydroquinone + O2 = 4 benzosemiquinone + 2 H2O. Its function is as follows. Lignin degradation and detoxification of lignin-derived products. The polypeptide is Laccase-17 (LAC17) (Arabidopsis thaliana (Mouse-ear cress)).